Consider the following 296-residue polypeptide: tRNA dimethylallyltransferase (296 aa).

ATP is bound at residue 2 to 9 (GPTASGKT). Residue 4-9 (TASGKT) participates in substrate binding. Interaction with substrate tRNA stretches follow at residues 27–30 (DSAL), 151–155 (QRLSR), and 232–237 (RCVGYR).

The protein belongs to the IPP transferase family. Monomer. Mg(2+) is required as a cofactor.

The catalysed reaction is adenosine(37) in tRNA + dimethylallyl diphosphate = N(6)-dimethylallyladenosine(37) in tRNA + diphosphate. Catalyzes the transfer of a dimethylallyl group onto the adenine at position 37 in tRNAs that read codons beginning with uridine, leading to the formation of N6-(dimethylallyl)adenosine (i(6)A). This chain is tRNA dimethylallyltransferase, found in Shewanella sp. (strain ANA-3).